The chain runs to 138 residues: Microneme antigen L2 (138 aa).

PAN domains follow at residues 9 to 78 (CFAH…PRSC) and 82 to 138 (CSDA…SKRA). 6 disulfide bridges follow: Cys9-Cys78, Cys34-Cys56, Cys38-Cys44, Cys82-Cys86, Cys107-Cys127, and Cys111-Cys117. Ser18 serves as a coordination point for a carbohydrate. A carbohydrate-binding residues include Lys59, Tyr66, and Asp71.

Homodimer or heterodimer. In terms of processing, contains six disulfide bonds.

It is found in the cytoplasmic vesicle. The protein localises to the secretory vesicle. Its subcellular location is the microneme. In terms of biological role, galactose-binding lectin. Plays a role in adhesion to the host cell. Has a potential role in invasion of host cells. The sequence is that of Microneme antigen L2 from Sarcocystis muris.